Consider the following 190-residue polypeptide: Ribosome maturation factor RimM (190 aa).

Residues 114-190 (DDEYYWVDLI…CITVDWQPDY (77 aa)) form the PRC barrel domain.

This sequence belongs to the RimM family. Binds ribosomal protein uS19.

Its subcellular location is the cytoplasm. An accessory protein needed during the final step in the assembly of 30S ribosomal subunit, possibly for assembly of the head region. Essential for efficient processing of 16S rRNA. May be needed both before and after RbfA during the maturation of 16S rRNA. It has affinity for free ribosomal 30S subunits but not for 70S ribosomes. The protein is Ribosome maturation factor RimM of Acidovorax sp. (strain JS42).